The sequence spans 352 residues: 4-hydroxybenzaldehyde synthase, chloroplastic (352 aa).

Asn122 carries an N-linked (GlcNAc...) asparagine glycan. Disulfide bonds link Cys159–Cys199 and Cys190–Cys231. An N-linked (GlcNAc...) asparagine glycan is attached at Asn247. Cys289 and Cys339 form a disulfide bridge. Active-site residues include His298 and Asn318.

The protein belongs to the peptidase C1 family. Forms homodimers, homotrimers and homotetramers. As to expression, mainly expressed in pods, but also present in stems, roots, leaves and embryos (at protein level).

The protein localises to the plastid. The protein resides in the chloroplast. It carries out the reaction (E)-4-coumarate + H2O = 4-hydroxybenzaldehyde + acetate. Its pathway is aromatic compound metabolism; phenylpropanoid biosynthesis. Inhibited by ascorbate. In terms of biological role, involved in the biosynthesis of vanillin (4-hydroxy-3-methoxy-benzaldehyde) and derivative natural products, key components of vanilla pods flavor. Catalyzes the conversion of (E)-4-coumarate to 4-hydroxybenzaldehyde, a vanillin precursor. Mediates the conversion of ferulic acid to 3-methoxy-4-hydroxybenzaldehyde with a very low efficiency. Cannot use cinnamic, caffeic, sinapic and o-coumaric acids as substrates. This Vanilla planifolia (Vanilla) protein is 4-hydroxybenzaldehyde synthase, chloroplastic.